The sequence spans 60 residues: Large ribosomal subunit protein bL32 (60 aa).

It belongs to the bacterial ribosomal protein bL32 family.

The chain is Large ribosomal subunit protein bL32 from Borrelia duttonii (strain Ly).